Here is a 473-residue protein sequence, read N- to C-terminus: MKTLYSLRRFYHVETLFNGTLALAGRDQETTGFAWWAGNARLINLSGKLLGAHVAHAGLIVFWAGAMNLFEVAHFVPEKPMYEQGLILLPHLATLGWGIGPGGEVIDTFPYFVSGVLHVISSAVLGFGGIYHALLGPETLEESFPFFGYVWKDRNKMTTILGIHLILLGVGAFLLVFKALYFGGVYDTWAPGGGDVRKITNLTLSPSVIFGYLLKSPFGGEGWIVSVDDLEDIIGGHVWLGSICIFGGIWHILTKPFAWARRALVWSGEAYLSYSLAALSVCGFIACCFVWFNNTAYPSEFYGPTGPEASQAQAFTFLVRDQRLGANVGSAQGPTGLGKYLMRSPTGEVIFGGETMRFWDLRAPWLEPLRGPNGLDLSRLKKDIQPWQERRSAEYMTHAPLGSLNSVGGVATEINAVNYVSPRSWLSTSHFVLAFFLFVGHLWHAGRARAAAAGFEKGIDRDFEPVLSMTPLN.

Positions 1–14 (MKTLYSLRRFYHVE) are excised as a propeptide. Threonine 15 bears the N-acetylthreonine mark. Phosphothreonine is present on threonine 15. The next 5 membrane-spanning stretches (helical) occupy residues 69 to 93 (LFEV…PHLA), 134 to 155 (LLGP…KDRN), 178 to 200 (KALY…RKIT), 255 to 275 (KPFA…LSYS), and 291 to 312 (WFNN…ASQA). Position 367 (glutamate 367) interacts with [CaMn4O5] cluster. The chain crosses the membrane as a helical span at residues 447–471 (RARAAAAGFEKGIDRDFEPVLSMTP).

Belongs to the PsbB/PsbC family. PsbC subfamily. As to quaternary structure, PSII is composed of 1 copy each of membrane proteins PsbA, PsbB, PsbC, PsbD, PsbE, PsbF, PsbH, PsbI, PsbJ, PsbK, PsbL, PsbM, PsbT, PsbX, PsbY, PsbZ, Psb30/Ycf12, at least 3 peripheral proteins of the oxygen-evolving complex and a large number of cofactors. It forms dimeric complexes. The cofactor is Binds multiple chlorophylls and provides some of the ligands for the Ca-4Mn-5O cluster of the oxygen-evolving complex. It may also provide a ligand for a Cl- that is required for oxygen evolution. PSII binds additional chlorophylls, carotenoids and specific lipids..

The protein resides in the plastid. The protein localises to the chloroplast thylakoid membrane. One of the components of the core complex of photosystem II (PSII). It binds chlorophyll and helps catalyze the primary light-induced photochemical processes of PSII. PSII is a light-driven water:plastoquinone oxidoreductase, using light energy to abstract electrons from H(2)O, generating O(2) and a proton gradient subsequently used for ATP formation. In Aethionema cordifolium (Lebanon stonecress), this protein is Photosystem II CP43 reaction center protein.